Here is a 226-residue protein sequence, read N- to C-terminus: ATP-dependent Clp protease proteolytic subunit 4 (226 aa).

Serine 122 serves as the catalytic Nucleophile. Histidine 147 is a catalytic residue.

It belongs to the peptidase S14 family. Fourteen ClpP subunits assemble into 2 heptameric rings which stack back to back to give a disk-like structure with a central cavity, resembling the structure of eukaryotic proteasomes.

The protein resides in the cytoplasm. It catalyses the reaction Hydrolysis of proteins to small peptides in the presence of ATP and magnesium. alpha-casein is the usual test substrate. In the absence of ATP, only oligopeptides shorter than five residues are hydrolyzed (such as succinyl-Leu-Tyr-|-NHMec, and Leu-Tyr-Leu-|-Tyr-Trp, in which cleavage of the -Tyr-|-Leu- and -Tyr-|-Trp bonds also occurs).. In terms of biological role, cleaves peptides in various proteins in a process that requires ATP hydrolysis. Has a chymotrypsin-like activity. Plays a major role in the degradation of misfolded proteins. In Streptomyces avermitilis (strain ATCC 31267 / DSM 46492 / JCM 5070 / NBRC 14893 / NCIMB 12804 / NRRL 8165 / MA-4680), this protein is ATP-dependent Clp protease proteolytic subunit 4.